The following is a 186-amino-acid chain: Peptidyl-tRNA hydrolase (186 aa).

Y14 lines the tRNA pocket. Residue H19 is the Proton acceptor of the active site. Positions 61, 63, and 107 each coordinate tRNA.

It belongs to the PTH family. As to quaternary structure, monomer.

The protein localises to the cytoplasm. It catalyses the reaction an N-acyl-L-alpha-aminoacyl-tRNA + H2O = an N-acyl-L-amino acid + a tRNA + H(+). Its function is as follows. Hydrolyzes ribosome-free peptidyl-tRNAs (with 1 or more amino acids incorporated), which drop off the ribosome during protein synthesis, or as a result of ribosome stalling. Catalyzes the release of premature peptidyl moieties from peptidyl-tRNA molecules trapped in stalled 50S ribosomal subunits, and thus maintains levels of free tRNAs and 50S ribosomes. This is Peptidyl-tRNA hydrolase from Helicobacter pylori (strain Shi470).